The sequence spans 489 residues: Glycogen synthase (489 aa).

An ADP-alpha-D-glucose-binding site is contributed by K15.

It belongs to the glycosyltransferase 1 family. Bacterial/plant glycogen synthase subfamily.

It carries out the reaction [(1-&gt;4)-alpha-D-glucosyl](n) + ADP-alpha-D-glucose = [(1-&gt;4)-alpha-D-glucosyl](n+1) + ADP + H(+). Its pathway is glycan biosynthesis; glycogen biosynthesis. Synthesizes alpha-1,4-glucan chains using ADP-glucose. This is Glycogen synthase from Francisella tularensis subsp. mediasiatica (strain FSC147).